The sequence spans 185 residues: Probable chorismate pyruvate-lyase (185 aa).

Positions 84, 122, and 178 each coordinate substrate.

Belongs to the UbiC family.

The protein localises to the cytoplasm. It catalyses the reaction chorismate = 4-hydroxybenzoate + pyruvate. It functions in the pathway cofactor biosynthesis; ubiquinone biosynthesis. Functionally, removes the pyruvyl group from chorismate, with concomitant aromatization of the ring, to provide 4-hydroxybenzoate (4HB) for the ubiquinone pathway. This chain is Probable chorismate pyruvate-lyase, found in Hydrogenovibrio crunogenus (strain DSM 25203 / XCL-2) (Thiomicrospira crunogena).